Reading from the N-terminus, the 212-residue chain is Thymidylate kinase (212 aa).

ATP is bound at residue 11 to 18 (GMEGAGKS).

The protein belongs to the thymidylate kinase family.

It carries out the reaction dTMP + ATP = dTDP + ADP. Its function is as follows. Phosphorylation of dTMP to form dTDP in both de novo and salvage pathways of dTTP synthesis. This Colwellia psychrerythraea (strain 34H / ATCC BAA-681) (Vibrio psychroerythus) protein is Thymidylate kinase.